The following is a 470-amino-acid chain: Calcium/manganese antiporter SLC30A10 (470 aa).

Over 1–10 the chain is Cytoplasmic; sequence MGRYSGKTCR. A helical transmembrane segment spans residues 11-31; the sequence is LLFMLVLTAAFFVAELVSGYL. Over 32–34 the chain is Extracellular; the sequence is GNS. The chain crosses the membrane as a helical span at residues 35–55; sequence IALLSDSFNMLSDLISLCVGL. The Cytoplasmic segment spans residues 56-81; the sequence is GSGYIARRGPRGSSATYGYVRAEVVG. A helical transmembrane segment spans residues 82 to 102; that stretch reads ALSNAVFLTALCFTIFVEAVL. Topologically, residues 103-113 are extracellular; sequence RLARPERIDDP. A helical membrane pass occupies residues 114–134; it reads ELVLIVGALGLAVNVVGLLIF. At 135–233 the chain is on the cytoplasmic side; sequence QDCGACFSRC…KSEALNIRGV (99 aa). Residues 146-223 are disordered; it reads RGRRTRPSQQ…EPEETTKKEK (78 aa). Over residues 171–184 the composition is skewed to low complexity; it reads AATATAPGSGTAVT. The helical transmembrane segment at 234 to 254 threads the bilayer; it reads LLHVMGDALGSVVVVITAIIF. The Extracellular segment spans residues 255–270; it reads YVQPLRREDPCNWQCY. Residues 271–291 traverse the membrane as a helical segment; it reads IDPSLTVVMVIIILSSAFPLI. The Cytoplasmic segment spans residues 292–470; that stretch reads KETAVILLQM…RQHYENSTHF (179 aa). The interval 300-470 is required for plasma membrane localization; sequence QMVPKGVNME…RQHYENSTHF (171 aa). Residues 451–470 form a disordered region; the sequence is QGQTLSKTQERQHYENSTHF. A compositionally biased stretch (basic and acidic residues) spans 458–470; it reads TQERQHYENSTHF.

This sequence belongs to the cation diffusion facilitator (CDF) transporter (TC 2.A.4) family. SLC30A subfamily. In terms of assembly, forms homodimers. Forms heterodimers and high-molecular weight oligomers with SLC30A3, SLC30A2 and SLC30A4; heterodimerization is mediated by covalent-bound tyrosine residues, occurs probably in a tissue-specific manner and could mediate the intracellular zinc transport activity into early endosomes and recycling endosomes. In terms of tissue distribution, specifically expressed in fetal liver and fetal brain.

It localises to the cell membrane. Its subcellular location is the golgi apparatus membrane. The protein resides in the recycling endosome membrane. It is found in the early endosome membrane. It carries out the reaction Mn(2+)(out) + Ca(2+)(in) = Mn(2+)(in) + Ca(2+)(out). It catalyses the reaction Zn(2+)(in) = Zn(2+)(out). Calcium:manganese antiporter of the plasma membrane mediating the efflux of intracellular manganese coupled to an active extracellular calcium exchange. Required for intracellular manganese homeostasis, an essential cation for the function of several enzymes, including some crucially important for the metabolism of neurotransmitters and other neuronal metabolic pathways. Manganese can also be cytotoxic and induce oxidative stress, mitochondrial dysfunction and apoptosis. Could also have an intracellular zinc ion transporter activity, directly regulating intracellular zinc ion homeostasis and more indirectly various signaling pathway and biological processes. In Mus musculus (Mouse), this protein is Calcium/manganese antiporter SLC30A10.